We begin with the raw amino-acid sequence, 4644 residues long: Cytoplasmic dynein 1 heavy chain 1 (4644 aa).

Position 2 is an N-acetylserine (Ser2). Positions 2-1865 (SEPGGGEDGS…SIQMANAKFN (1864 aa)) are stem. Coiled coils occupy residues 48-69 (AALE…FLSD), 179-200 (SVEK…NIEI), 453-476 (AHRK…QLRA), and 541-564 (TEAW…RITA). A Phosphoserine modification is found at Ser68. Positions 446–701 (MVWRINPAHR…NTQEIFDDWA (256 aa)) are interaction with DYNC1I2. An interaction with DYNC1LI2 region spans residues 649–800 (AKQIDRQLTA…EKVEERNTIS (152 aa)). Residue Lys1123 is modified to N6-acetyllysine. Residues 1169 to 1201 (TYVQSLKRKIKQFEKQVELYRNGQRLLEKQRFQ) are a coiled coil. The residue at position 1228 (Ser1228) is a Phosphoserine. 2 coiled-coil regions span residues 1229-1250 (AIQQ…AVES) and 1355-1371 (RKLR…LKNF). 4 AAA regions span residues 1866–2097 (YGFE…VLVS), 2178–2450 (EELK…LTRL), 2554–2803 (EVET…WVRG), and 2897–3166 (VFYE…GGRT). ATP contacts are provided by residues 1904–1911 (GPAGTGKT) and 2222–2229 (GPSGSGKS). The disordered stretch occupies residues 2388-2408 (GEDEAQRRRKGKEDEGEEAAS). ATP contacts are provided by residues 2593–2600 (GPPGSGKT) and 2935–2942 (GVSGAGKT). 3 coiled-coil regions span residues 3187–3273 (EKRS…ADKQ), 3394–3498 (AIAQ…KNQM), and 3735–3798 (EFQL…VSQQ). A stalk region spans residues 3187–3498 (EKRSELEEQQ…KTSETFKNQM (312 aa)). Lys3478 is subject to N6-acetyllysine. AAA regions lie at residues 3551–3780 (LSNA…EVTR) and 4003–4219 (AHMF…TVDT). Ser4160 is subject to Phosphoserine. Lys4281 carries the N6-acetyllysine modification. Thr4364 carries the post-translational modification Phosphothreonine. Ser4366 carries the phosphoserine modification.

This sequence belongs to the dynein heavy chain family. In terms of assembly, homodimer. The cytoplasmic dynein 1 complex consists of two catalytic heavy chains (HCs) and a number of non-catalytic subunits presented by intermediate chains (ICs), light intermediate chains (LICs) and light chains (LCs); the composition seems to vary in respect to the IC, LIC and LC composition. The heavy chain homodimer serves as a scaffold for the probable homodimeric assembly of the respective non-catalytic subunits. The ICs and LICs bind directly to the HC dimer and dynein LCs assemble on the IC dimer. Interacts with DYNC1LI1; DYNC1LI1 and DYNC1LI2 bind mutually exclusive to DYNC1H1. Interacts with DYNC1LI2; DYNC1LI1 and DYNC1LI2 bind mutually exclusive to DYNC1H1. Interacts with DYNC1I2. Interacts with BICD2. Interacts with DNALI1.

Its subcellular location is the cytoplasm. The protein resides in the cytoskeleton. Functionally, cytoplasmic dynein 1 acts as a motor for the intracellular retrograde motility of vesicles and organelles along microtubules. Dynein has ATPase activity; the force-producing power stroke is thought to occur on release of ADP. Plays a role in mitotic spindle assembly and metaphase plate congression. The sequence is that of Cytoplasmic dynein 1 heavy chain 1 (Dync1h1) from Mus musculus (Mouse).